The following is a 484-amino-acid chain: Probable D-lactate dehydrogenase, mitochondrial (484 aa).

A mitochondrion-targeting transit peptide spans 1-52; it reads MAMLLRVATQRLSPWRSFCSRGSQGGLSQDFVEALKAVVGSPHVSTASAVRE. Lysine 36 carries the N6-acetyllysine modification. The FAD-binding PCMH-type domain occupies 62 to 242; that stretch reads RCQPPDAVVW…TSTTLRLHPA (181 aa). Lysine 292 carries the post-translational modification N6-acetyllysine. Lysine 335 is modified (N6-acetyllysine; alternate). The residue at position 335 (lysine 335) is an N6-succinyllysine; alternate. 2 positions are modified to N6-acetyllysine: lysine 422 and lysine 449.

It belongs to the FAD-binding oxidoreductase/transferase type 4 family. In terms of assembly, interacts with CSRP3. It depends on FAD as a cofactor. In terms of tissue distribution, readily detected in liver and kidney, with a weaker signal observed in heart, skeletal muscle, stomach, brain, and lung.

It is found in the mitochondrion. It carries out the reaction (R)-lactate + 2 Fe(III)-[cytochrome c] = 2 Fe(II)-[cytochrome c] + pyruvate + 2 H(+). In terms of biological role, involved in D-lactate, but not L-lactate catabolic process. In Mus musculus (Mouse), this protein is Probable D-lactate dehydrogenase, mitochondrial.